We begin with the raw amino-acid sequence, 462 residues long: ATP synthase subunit beta (462 aa).

151-158 (GGAGVGKT) is a binding site for ATP.

It belongs to the ATPase alpha/beta chains family. In terms of assembly, F-type ATPases have 2 components, CF(1) - the catalytic core - and CF(0) - the membrane proton channel. CF(1) has five subunits: alpha(3), beta(3), gamma(1), delta(1), epsilon(1). CF(0) has three main subunits: a(1), b(2) and c(9-12). The alpha and beta chains form an alternating ring which encloses part of the gamma chain. CF(1) is attached to CF(0) by a central stalk formed by the gamma and epsilon chains, while a peripheral stalk is formed by the delta and b chains.

Its subcellular location is the cell inner membrane. The catalysed reaction is ATP + H2O + 4 H(+)(in) = ADP + phosphate + 5 H(+)(out). Its function is as follows. Produces ATP from ADP in the presence of a proton gradient across the membrane. The catalytic sites are hosted primarily by the beta subunits. The protein is ATP synthase subunit beta of Chlorobaculum parvum (strain DSM 263 / NCIMB 8327) (Chlorobium vibrioforme subsp. thiosulfatophilum).